The following is a 449-amino-acid chain: C4-dicarboxylate transport protein (449 aa).

The next 9 membrane-spanning stretches (helical) occupy residues 5-25, 45-65, 77-97, 149-169, 185-205, 231-251, 298-318, 332-352, and 353-373; these read AVFKSLYFQVLVAIAIGVSLG, LIKMIIAPIIFCTIVVGIAGM, LAVLYFEVVSTIALVIGLIVV, GDMLQVLFFSILFGYAMHSFG, VLFGIVGVIMKVAPIGAFGAM, CVIFILGVLGSIAAFHGFSII, GYSFNLDGTSIYLTMAAVFIA, TLLVILLLTSKGAAGVTGSGF, and IVLAATLSAVGTVPVAGLALI.

This sequence belongs to the dicarboxylate/amino acid:cation symporter (DAACS) (TC 2.A.23) family.

Its subcellular location is the cell inner membrane. Its function is as follows. Responsible for the transport of dicarboxylates such as succinate, fumarate, and malate from the periplasm across the membrane. This chain is C4-dicarboxylate transport protein, found in Dechloromonas aromatica (strain RCB).